The chain runs to 635 residues: Threonine--tRNA ligase (635 aa).

Positions 1–58 (MIRVICDNETFELPTGSTAADFASKIKNSHYFAGVVINDQIKDLSTTLSEGDVLKFVT) constitute a TGS domain. A catalytic region spans residues 237–528 (DHRVLGTKLD…LIEHFKGRFP (292 aa)). The Zn(2+) site is built by cysteine 328, histidine 379, and histidine 505.

Belongs to the class-II aminoacyl-tRNA synthetase family. In terms of assembly, homodimer. The cofactor is Zn(2+).

The protein resides in the cytoplasm. It catalyses the reaction tRNA(Thr) + L-threonine + ATP = L-threonyl-tRNA(Thr) + AMP + diphosphate + H(+). Functionally, catalyzes the attachment of threonine to tRNA(Thr) in a two-step reaction: L-threonine is first activated by ATP to form Thr-AMP and then transferred to the acceptor end of tRNA(Thr). Also edits incorrectly charged L-seryl-tRNA(Thr). This chain is Threonine--tRNA ligase, found in Chlamydia felis (strain Fe/C-56) (Chlamydophila felis).